Reading from the N-terminus, the 360-residue chain is uncharacterized protein (360 aa).

The next 7 helical transmembrane spans lie at 26–48 (SVCY…SGAT), 58–80 (LHPL…ASVL), 89–111 (VMGL…NIAH), 126–148 (LSTG…SILA), 169–191 (RLAY…PTAL), 195–214 (IPSV…YALL), and 227–249 (CALC…SHMV).

The protein localises to the cell membrane. This is an uncharacterized protein from Treponema pallidum (strain Nichols).